Here is a 151-residue protein sequence, read N- to C-terminus: MGRMHAPGKGLSSSALPYRRSVPTWLKLSSEDVKEQIYKLAKKGLRPSQIGVILRDSHGXAQVRFVTGNQILRVLKAKGLAPDLPEDIYHLIKKAVAMRKHLERNRKDTDSKFRLILVESRIHRLGRYYKTKGVLPPNWKYESATASALVA.

It belongs to the universal ribosomal protein uS15 family.

This Ciona intestinalis (Transparent sea squirt) protein is Small ribosomal subunit protein uS15 (RPS13).